The chain runs to 438 residues: uncharacterized protein (438 aa).

Transmembrane regions (helical) follow at residues 22 to 42, 59 to 79, 89 to 109, 137 to 157, 174 to 194, 237 to 257, 258 to 278, 292 to 312, 330 to 350, 356 to 376, 380 to 400, and 418 to 438; these read VSPI…GGFG, SAAL…AGLF, IVKG…MLIA, MVMA…TPWG, FFVP…FLAF, LIYL…LGTK, HPSV…YPNV, AITV…LSGT, MGGF…FVLS, FGMV…PVEI, SIMG…VLLV, and AVIT…ITIL.

This sequence belongs to the CitM (TC 2.A.11) transporter family.

It localises to the cell membrane. Transports the free citrate anion. This is an uncharacterized protein from Bacillus subtilis (strain 168).